The following is a 358-amino-acid chain: Protein-arginine kinase (358 aa).

Residues 24-255 form the Phosphagen kinase C-terminal domain; that stretch reads IVLSSRIRLA…KQLIRQERVA (232 aa). ATP-binding positions include 27-31, His-92, Arg-126, 177-181, and 208-213; these read SSRIR, RASVM, and RGIYGE. Residues 338–343 carry the RDXXRA motif of the pArg binding pocket involved in allosteric regulation motif; that stretch reads RDERRA.

The protein belongs to the ATP:guanido phosphotransferase family.

The catalysed reaction is L-arginyl-[protein] + ATP = N(omega)-phospho-L-arginyl-[protein] + ADP + H(+). Its activity is regulated as follows. Appears to be allosterically activated by the binding of pArg-containing polypeptides to the pArg-binding pocket localized in the C-terminal domain of McsB. Functionally, catalyzes the specific phosphorylation of arginine residues in a large number of proteins. Is part of the bacterial stress response system. Protein arginine phosphorylation has a physiologically important role and is involved in the regulation of many critical cellular processes, such as protein homeostasis, motility, competence, and stringent and stress responses, by regulating gene expression and protein activity. This Shouchella clausii (strain KSM-K16) (Alkalihalobacillus clausii) protein is Protein-arginine kinase.